The primary structure comprises 521 residues: Histidine--tRNA ligase (521 aa).

L-histidine-binding positions include 137–139 (DLT), Arg-164, Gln-180, Asp-184, Arg-338, and 342–343 (YY).

This sequence belongs to the class-II aminoacyl-tRNA synthetase family.

It catalyses the reaction tRNA(His) + L-histidine + ATP = L-histidyl-tRNA(His) + AMP + diphosphate + H(+). Involved in protein synthesis. Catalyzes the specific attachment of an amino acid to its cognate tRNA in a 2 step reaction: the amino acid (AA) is first activated by ATP to form AA-AMP and then transferred to the acceptor end of the tRNA. Required for germ cell development. The sequence is that of Histidine--tRNA ligase from Caenorhabditis elegans.